The primary structure comprises 210 residues: Histone H1A (210 aa).

Disordered regions lie at residues 1–49 and 101–210; these read MAEA…VSEQ and KGSG…PKKK. 2 stretches are compositionally biased toward low complexity: residues 26–45 and 129–142; these read KKAA…SGPS and PLAA…AAAK. Positions 42-113 constitute an H15 domain; sequence SGPSVSEQIV…GASGSFKLNK (72 aa). 2 stretches are compositionally biased toward basic residues: residues 143–153 and 160–180; these read KTAKSPKKPKK and SPKK…KTAV. Residues 181–192 are compositionally biased toward low complexity; sequence KPKVAAKSPAKA. Residues 193-210 show a composition bias toward basic residues; that stretch reads KAAKPKVAKAKKAAPKKK.

The protein belongs to the histone H1/H5 family.

The protein resides in the nucleus. Its subcellular location is the chromosome. In terms of biological role, histones H1 are necessary for the condensation of nucleosome chains into higher-order structures. This chain is Histone H1A, found in Xenopus laevis (African clawed frog).